We begin with the raw amino-acid sequence, 422 residues long: G-protein coupled receptor 151 protein (422 aa).

Topologically, residues 1-45 (MGKAMLRAGFADTNSSNMNESFARLHFAGGYLPSDSKDWRTIIPS) are extracellular. 2 N-linked (GlcNAc...) asparagine glycosylation sites follow: asparagine 14 and asparagine 19. Residues 46–66 (LLMAVCLVGLVGNLCVIGILL) form a helical membrane-spanning segment. Over 67-76 (HGVWKRKPST) the chain is Cytoplasmic. The helical transmembrane segment at 77 to 97 (IHSLILNLSLADFSLLLFSAP) threads the bilayer. Residues 98–123 (VRAAAYSKGVWDLGWFICKSSDWFTH) are Extracellular-facing. A disulfide bond links cysteine 115 and cysteine 191. Residues 124-144 (VCMAAKSLTFVVVAKACFAYA) traverse the membrane as a helical segment. Residues 145–157 (SDPAKQESIHSRT) lie on the Cytoplasmic side of the membrane. The helical transmembrane segment at 158-178 (IWSVLAGIWVVASLLPLPEWL) threads the bilayer. Topologically, residues 179 to 205 (FSTTRRHAGVEMCLVDVPAVAEEFMSM) are extracellular. Residues 206–226 (FGKLYPLLVFCLPLLLAGVYF) form a helical membrane-spanning segment. Over 227–259 (WRAYDQCKTRCTKTRNLRDQMRSKQLTVMLLST) the chain is Cytoplasmic. The chain crosses the membrane as a helical span at residues 260–280 (AIISALLWLPEWIAWLWVWHV). Topologically, residues 281-290 (KAGGPMPPQG) are extracellular. A helical transmembrane segment spans residues 291-311 (FIALSQVLMFFTSTANPLIFL). Residues 312-422 (VMSEEFKAGL…HEGQETEGCN (111 aa)) are Cytoplasmic-facing. Residues 339–422 (VQEAPAGNTE…HEGQETEGCN (84 aa)) are disordered. The span at 366–380 (TDGRGSPDDSKEKSG) shows a compositional bias: basic and acidic residues.

High expression in the brain and lower levels in kidney and liver. In the nervous system expressed specifically in the habenular area (at protein level).

The protein resides in the cell membrane. In terms of biological role, proton-sensing G-protein coupled receptor. The polypeptide is G-protein coupled receptor 151 protein (Gpr151) (Mus musculus (Mouse)).